The sequence spans 167 residues: Novel acetylcholine receptor chaperone (167 aa).

The Cytoplasmic portion of the chain corresponds to 1 to 5; the sequence is MASPR. Residues 6–26 form a helical membrane-spanning segment; sequence TITIMALSVALGLFFVFMGTI. Topologically, residues 27–61 are lumenal; that stretch reads KLTPRLSKDAYSEMKRAYKSYVRALPLLKKMGINS. The interval 43 to 54 is interaction with NGFR; it reads AYKSYVRALPLL. Residues 62–82 traverse the membrane as a helical segment; that stretch reads ILLRKSIGALEVACGIVMTLV. Topologically, residues 83–88 are cytoplasmic; the sequence is PGRPKD. Residues 89 to 109 traverse the membrane as a helical segment; it reads VANFFLLLLVLAVLFFHQLVG. Over 110 to 114 the chain is Lumenal; sequence DPLKR. The helical transmembrane segment at 115–132 threads the bilayer; it reads YAHALVFGILLTCRLLIA. Topologically, residues 133 to 167 are cytoplasmic; it reads RKPEDRSSEKKALPESAEEQPSLYEKAPQGKVKVS. Residues 135–145 are compositionally biased toward basic and acidic residues; the sequence is PEDRSSEKKAL. The disordered stretch occupies residues 135-167; sequence PEDRSSEKKALPESAEEQPSLYEKAPQGKVKVS.

It belongs to the DoxX family. May interact with NGFR. Interacts with RPN1, RPN2 and CANX. As to expression, brain (at protein level). Expressed in the spinal cord dorsal horn (at protein level).

It localises to the peroxisome membrane. Its subcellular location is the cytoplasmic vesicle. The protein localises to the endoplasmic reticulum membrane. Its function is as follows. Molecular chaperone which mediates the proper assembly and functional expression of the nicotinic acetylcholine receptors (nAChRs) throughout the brain. Essential for the proper folding, assembly, function and surface trafficking of alpha-7 (CHRNA7), alpha-4-beta-2, alpha-3-beta-2 and alpha-3-beta-4 receptors. Stably associates with ribophorin-1 (RPN1) and ribophorin-2 (RPN2) (components of the oligosaccharyl transferase (OST) complex) and with calnexin (CANX), both of which are critical for NACHO-mediated effects on CHRNA7 assembly and function. Facilitates the proper folding and assembly of alpha-6-beta-2 and alpha-6-beta-2-beta-3 receptors and acts at early stages of the nAChRs subunit assembly. Promotes the expression of the alpha-4(2):beta-2(3) stoichiometric form over the alpha-4(3):beta-2(2) form. The protein is Novel acetylcholine receptor chaperone of Mus musculus (Mouse).